A 260-amino-acid chain; its full sequence is Proteasome subunit alpha (260 aa).

It belongs to the peptidase T1A family. In terms of assembly, the 20S proteasome core is composed of 14 alpha and 14 beta subunits that assemble into four stacked heptameric rings, resulting in a barrel-shaped structure. The two inner rings, each composed of seven catalytic beta subunits, are sandwiched by two outer rings, each composed of seven alpha subunits. The catalytic chamber with the active sites is on the inside of the barrel. Has a gated structure, the ends of the cylinder being occluded by the N-termini of the alpha-subunits. Is capped at one or both ends by the proteasome regulatory ATPase, PAN.

It localises to the cytoplasm. Its activity is regulated as follows. The formation of the proteasomal ATPase PAN-20S proteasome complex, via the docking of the C-termini of PAN into the intersubunit pockets in the alpha-rings, triggers opening of the gate for substrate entry. Interconversion between the open-gate and close-gate conformations leads to a dynamic regulation of the 20S proteasome proteolysis activity. Its function is as follows. Component of the proteasome core, a large protease complex with broad specificity involved in protein degradation. The protein is Proteasome subunit alpha of Pyrococcus abyssi (strain GE5 / Orsay).